A 411-amino-acid chain; its full sequence is Tyrosine--tRNA ligase (411 aa).

Residue Tyr-33 participates in L-tyrosine binding. The 'HIGH' region motif lies at 38-47 (PTAESLHLGN). L-tyrosine contacts are provided by Tyr-160 and Gln-164. A 'KMSKS' region motif is present at residues 222–226 (KIGKS). ATP is bound at residue Lys-225. The region spanning 347 to 411 (SVIETLIKNK…KKQVILFKTV (65 aa)) is the S4 RNA-binding domain.

Belongs to the class-I aminoacyl-tRNA synthetase family. TyrS type 1 subfamily. As to quaternary structure, homodimer.

The protein resides in the cytoplasm. It carries out the reaction tRNA(Tyr) + L-tyrosine + ATP = L-tyrosyl-tRNA(Tyr) + AMP + diphosphate + H(+). Catalyzes the attachment of tyrosine to tRNA(Tyr) in a two-step reaction: tyrosine is first activated by ATP to form Tyr-AMP and then transferred to the acceptor end of tRNA(Tyr). In Mycoplasmopsis agalactiae (strain NCTC 10123 / CIP 59.7 / PG2) (Mycoplasma agalactiae), this protein is Tyrosine--tRNA ligase.